An 898-amino-acid chain; its full sequence is Methionine--tRNA ligase, cytoplasmic (898 aa).

One can recognise a GST C-terminal domain in the interval 74 to 198 (GWEQDDLTNQ…VLKQQGVLAL (125 aa)). The 'HIGH' region motif lies at 273–283 (PYVNNVPHLGN). The 'KMSKS' region motif lies at 593 to 597 (KFSKS). ATP is bound at residue Lys596. Ser825 is modified (phosphoserine). At Thr833 the chain carries Phosphothreonine. The 57-residue stretch at 839–895 (QIQALTEEVTKQGNIVRELKAQKADKNQIAAEVAKLLDLKKQLALAEGKPLETSKGK) folds into the WHEP-TRS domain.

The protein belongs to the class-I aminoacyl-tRNA synthetase family. Monomer. Part of a multisubunit complex that groups tRNA ligases for Arg (RARS1), Asp (DARS1), Gln (QARS1), Ile (IARS1), Leu (LARS1), Lys (KARS1), Met (MARS1) the bifunctional ligase for Glu and Pro (EPRS1) and the auxiliary subunits AIMP1/p43, AIMP2/p38 and EEF1E1/p18. Forms a linear complex that contains MARS1, EEF1E1, EPRS1 and AIMP2 that is at the core of the multisubunit complex.

The protein localises to the cytoplasm. It localises to the cytosol. The protein resides in the nucleus. It is found in the nucleolus. It catalyses the reaction tRNA(Met) + L-methionine + ATP = L-methionyl-tRNA(Met) + AMP + diphosphate. Catalyzes the specific attachment of an amino acid to its cognate tRNA in a 2 step reaction: the amino acid (AA) is first activated by ATP to form AA-AMP and then transferred to the acceptor end of the tRNA. Plays a role in the synthesis of ribosomal RNA in the nucleolus. The protein is Methionine--tRNA ligase, cytoplasmic (MARS1) of Bos taurus (Bovine).